Reading from the N-terminus, the 434-residue chain is Fez family zinc finger protein 2 (434 aa).

An Engrailed homology 1 repressor motif is present at residues S27 to P42. 6 C2H2-type zinc fingers span residues F253–H275, F281–H303, H309–H331, F337–H359, Y365–H387, and F393–H416.

Belongs to the krueppel C2H2-type zinc-finger protein family.

The protein resides in the nucleus. Functionally, transcription repressor. Component of the regulatory cascade that controls the development of dopaminergic (DA) and serotonergic (5HT) neurons. This chain is Fez family zinc finger protein 2 (fezf2), found in Xenopus laevis (African clawed frog).